Here is a 292-residue protein sequence, read N- to C-terminus: E3 ubiquitin-protein ligase RNF144A (292 aa).

The interval 16–236 (PLVSCKLCLG…YDKGPCRNKL (221 aa)) is TRIAD supradomain. Zn(2+)-binding residues include cysteine 20, cysteine 23, cysteine 43, cysteine 46, cysteine 111, cysteine 116, cysteine 135, cysteine 138, cysteine 143, cysteine 146, histidine 151, cysteine 156, cysteine 185, and cysteine 188. The RING-type 1 zinc finger occupies 20–70 (CKLCLGEYPAEQMTTIAQCQCIFCTLCLKQYVELLIKEGLETAISCPDAAC). The IBR-type zinc finger occupies 91-156 (QRYKKLQFER…KARWHPGQGC (66 aa)). Residues 185–214 (CPKCRVYIERDEGCAQMMCKNCKHAFCWYC) form an RING-type 2; atypical zinc finger. Cysteine 198 is an active-site residue. 6 residues coordinate Zn(2+): cysteine 203, cysteine 206, cysteine 211, cysteine 214, histidine 226, and cysteine 232. A helical membrane pass occupies residues 250 to 270 (VVGIFAGFGLLLLVASPFLLL).

Belongs to the RBR family. RNF144 subfamily. Self-associates. Interacts with UBE2L3. In terms of processing, autoubiquitinated.

Its subcellular location is the cell membrane. The protein localises to the cytoplasmic vesicle membrane. It carries out the reaction [E2 ubiquitin-conjugating enzyme]-S-ubiquitinyl-L-cysteine + [acceptor protein]-L-lysine = [E2 ubiquitin-conjugating enzyme]-L-cysteine + [acceptor protein]-N(6)-ubiquitinyl-L-lysine.. It participates in protein modification; protein ubiquitination. E3 ubiquitin-protein ligase which accepts ubiquitin from E2 ubiquitin-conjugating enzymes UBE2L3 and UBE2L6 in the form of a thioester and then directly transfers the ubiquitin to targeted substrates. Mediates the ubiquitination and degradation of the DNA damage kinase PRKDC during DNA damage. Positively regulates DNA virus or exogenous cytosolic DNA-triggered innate immune response by mediating STING1 ubiquitination and increasing its 'Lys-6'-linked ubiquitination and translocation from the endoplasmic reticulum to the Golgi leading to downstream signaling pathways. Plays a positive role in EGF-dependent cell proliferation by prolonging EGF/EGFR signaling during EGF stimulation through EGFR ubiquitination. Increases ERK activity independently of EGFR signaling by promoting polyubiquitination and subsequent degradation of VRK3 in the cytosol. This Mus musculus (Mouse) protein is E3 ubiquitin-protein ligase RNF144A (Rnf144a).